Reading from the N-terminus, the 161-residue chain is Allophycocyanin beta chain (161 aa).

At Asn-71 the chain carries N4-methylasparagine. Residue Cys-81 participates in (2R,3E)-phycocyanobilin binding.

Belongs to the phycobiliprotein family. In terms of assembly, heterodimer of an alpha and a beta chain. Contains one covalently linked phycocyanobilin chromophore.

Its subcellular location is the cellular thylakoid membrane. Its function is as follows. Light-harvesting photosynthetic bile pigment-protein from the phycobiliprotein complex. Allophycocyanin has a maximum absorption at approximately 650 nanometers. The protein is Allophycocyanin beta chain (apcB) of Synechocystis sp. (strain PCC 6714) (Aphanocapsa sp. (strain PCC 6714)).